We begin with the raw amino-acid sequence, 207 residues long: Casparian strip membrane protein 1 (207 aa).

Polar residues predominate over residues 1–12 (MEADSTTINVTE). A disordered region spans residues 1 to 20 (MEADSTTINVTETPKERKGK). Residues 1–48 (MEADSTTINVTETPKERKGKAPLLAAPPASSGVKRVLQKAPKGGYKRG) are Cytoplasmic-facing. The chain crosses the membrane as a helical span at residues 49–69 (LAVFDVVLRLAGIATALGAAI). At 70–98 (AMGSTDQTLPFFTQFFQFKAEFDDLPAFT) the chain is on the extracellular side. The chain crosses the membrane as a helical span at residues 99–119 (FFVIANAITAAYLALTIPISI). Residues 120 to 131 (VCIIRPHLVAPR) are Cytoplasmic-facing. The helical transmembrane segment at 132-152 (VLLIFLDTVMVALTTAAAGGT) threads the bilayer. Residues 153–184 (ASIVYLAHNGNSDANWPAICQQFNDXCQKVSG) lie on the Extracellular side of the membrane. Residues 185-205 (AVVASFLTVVVLMLLIVLSAF) form a helical membrane-spanning segment. Over 206–207 (AL) the chain is Cytoplasmic.

Belongs to the Casparian strip membrane proteins (CASP) family. In terms of assembly, homodimer and heterodimers.

It localises to the cell membrane. In terms of biological role, regulates membrane-cell wall junctions and localized cell wall deposition. Required for establishment of the Casparian strip membrane domain (CSD) and the subsequent formation of Casparian strips, a cell wall modification of the root endodermis that determines an apoplastic barrier between the intraorganismal apoplasm and the extraorganismal apoplasm and prevents lateral diffusion. The chain is Casparian strip membrane protein 1 from Cynara cardunculus var. scolymus (Globe artichoke).